A 568-amino-acid polypeptide reads, in one-letter code: Probable WRKY transcription factor 34 (568 aa).

Residues alanine 172–proline 236 constitute a DNA-binding region (WRKY 1). 4 residues coordinate Zn(2+): cysteine 203, cysteine 208, histidine 231, and histidine 233. Disordered stretches follow at residues aspartate 230 to aspartate 252 and lysine 337 to valine 360. The segment at residues serine 366–proline 431 is a DNA-binding region (WRKY 2). Residues cysteine 397, cysteine 402, histidine 426, and histidine 428 each contribute to the Zn(2+) site.

This sequence belongs to the WRKY group I family.

It is found in the nucleus. Its function is as follows. Transcription factor. Interacts specifically with the W box (5'-(T)TGAC[CT]-3'), a frequently occurring elicitor-responsive cis-acting element. This Arabidopsis thaliana (Mouse-ear cress) protein is Probable WRKY transcription factor 34 (WRKY34).